Here is a 399-residue protein sequence, read N- to C-terminus: MDTTFQAAIDTGKINGAVVCATDAQGHFVYNKATGERTLLSGEKQPQQLDDVLYLASATKLITTIAALQCVEDGLLSLDGDLSSIAPELAAKYVLTGFTDDESPLDDPPARPITLKMLLTHSSGTSYHFLDPSIAKWRAQYANPENEKPRLVEEMFTYPLSFQPGTGWMYGPGLDWAGRVVERVTGGTLMEFMQKRIFDPLGITDSQFYPVTREDLRARLVDLNPSDPGALGSAVIGGGGEMNLRGRGAFGGHGLFLTGLDFVKILRSLLANDGMLLKPAAVDNMFQQHLGPEAAASHRAALASPLGPFFRVGTDPETKVGYGLGGLLTLEDVDGWYGERTLTWGGGLTLTWFIDRKNNLCGVGAIQAVLPVDGDLMADLKQTFRHDIYRKYSAWKGQQ.

Residue serine 57 is the Nucleophile of the active site. Residues lysine 60 and tyrosine 170 each act as proton acceptor in the active site.

This sequence belongs to the class-A beta-lactamase family.

It catalyses the reaction lovastatin + H2O = monacolin J + (S)-2-methylbutanoate + H(+). It carries out the reaction pravastatin lactone + H2O = pravastatin diol lactone + (S)-2-methylbutanoate + H(+). The enzyme catalyses mevastatin + H2O = compactin diol lactone + (S)-2-methylbutanoate + H(+). In terms of biological role, esterase that can hydrolyze the side chain of lovastatin to produce monacolin J. Is also able to hydrolyze the side chains of mevastatin and pravastatin, but not simvastatin. In Penicillium rubens (strain ATCC 28089 / DSM 1075 / NRRL 1951 / Wisconsin 54-1255) (Penicillium chrysogenum), this protein is Lovastatin esterase.